The sequence spans 142 residues: Large ribosomal subunit protein uL11 (142 aa).

Belongs to the universal ribosomal protein uL11 family. Part of the ribosomal stalk of the 50S ribosomal subunit. Interacts with L10 and the large rRNA to form the base of the stalk. L10 forms an elongated spine to which L12 dimers bind in a sequential fashion forming a multimeric L10(L12)X complex. Post-translationally, one or more lysine residues are methylated.

Its function is as follows. Forms part of the ribosomal stalk which helps the ribosome interact with GTP-bound translation factors. This Alcanivorax borkumensis (strain ATCC 700651 / DSM 11573 / NCIMB 13689 / SK2) protein is Large ribosomal subunit protein uL11.